A 266-amino-acid chain; its full sequence is 3-methyl-2-oxobutanoate hydroxymethyltransferase (266 aa).

Positions 45 and 84 each coordinate Mg(2+). Residues 45–46 (DS), aspartate 84, and lysine 112 each bind 3-methyl-2-oxobutanoate. Glutamate 114 lines the Mg(2+) pocket. Glutamate 181 acts as the Proton acceptor in catalysis.

It belongs to the PanB family. Homodecamer; pentamer of dimers. Mg(2+) serves as cofactor.

It is found in the cytoplasm. The enzyme catalyses 3-methyl-2-oxobutanoate + (6R)-5,10-methylene-5,6,7,8-tetrahydrofolate + H2O = 2-dehydropantoate + (6S)-5,6,7,8-tetrahydrofolate. It functions in the pathway cofactor biosynthesis; (R)-pantothenate biosynthesis; (R)-pantoate from 3-methyl-2-oxobutanoate: step 1/2. Functionally, catalyzes the reversible reaction in which hydroxymethyl group from 5,10-methylenetetrahydrofolate is transferred onto alpha-ketoisovalerate to form ketopantoate. This Pseudomonas putida (strain ATCC 700007 / DSM 6899 / JCM 31910 / BCRC 17059 / LMG 24140 / F1) protein is 3-methyl-2-oxobutanoate hydroxymethyltransferase.